An 85-amino-acid polypeptide reads, in one-letter code: Phosphocarrier protein HPr (85 aa).

The HPr domain occupies 1-85 (MFQKEIKINA…HLSKIMTELE (85 aa)). The Pros-phosphohistidine intermediate role is filled by His-15.

This sequence belongs to the HPr family.

It localises to the cytoplasm. Its function is as follows. General (non sugar-specific) component of the phosphoenolpyruvate-dependent sugar phosphotransferase system (sugar PTS). This major carbohydrate active-transport system catalyzes the phosphorylation of incoming sugar substrates concomitantly with their translocation across the cell membrane. The phosphoryl group from phosphoenolpyruvate (PEP) is transferred to the phosphoryl carrier protein HPr by enzyme I. Phospho-HPr then transfers it to the PTS EIIA domain. The chain is Phosphocarrier protein HPr (ptsH) from Buchnera aphidicola subsp. Schizaphis graminum (strain Sg).